Reading from the N-terminus, the 67-residue chain is Sec-independent protein translocase protein TatA (67 aa).

The chain crosses the membrane as a helical span at residues 1 to 21 (MGSFSLTHWIIVLIIVVLIFG). A disordered region spans residues 43-67 (LNEGTDGKEAQKDDVIEHKKDEDKA). Residues 47-67 (TDGKEAQKDDVIEHKKDEDKA) show a composition bias toward basic and acidic residues.

This sequence belongs to the TatA/E family. As to quaternary structure, the Tat system comprises two distinct complexes: a TatABC complex, containing multiple copies of TatA, TatB and TatC subunits, and a separate TatA complex, containing only TatA subunits. Substrates initially bind to the TatABC complex, which probably triggers association of the separate TatA complex to form the active translocon.

The protein resides in the cell inner membrane. Its function is as follows. Part of the twin-arginine translocation (Tat) system that transports large folded proteins containing a characteristic twin-arginine motif in their signal peptide across membranes. TatA could form the protein-conducting channel of the Tat system. In Neisseria gonorrhoeae (strain ATCC 700825 / FA 1090), this protein is Sec-independent protein translocase protein TatA.